A 308-amino-acid polypeptide reads, in one-letter code: Ribosomal RNA small subunit methyltransferase H (308 aa).

S-adenosyl-L-methionine-binding positions include 36 to 38 (GGH), Asp55, Phe82, Asp103, and Gln110.

Belongs to the methyltransferase superfamily. RsmH family.

Its subcellular location is the cytoplasm. The catalysed reaction is cytidine(1402) in 16S rRNA + S-adenosyl-L-methionine = N(4)-methylcytidine(1402) in 16S rRNA + S-adenosyl-L-homocysteine + H(+). Functionally, specifically methylates the N4 position of cytidine in position 1402 (C1402) of 16S rRNA. This Helicobacter pylori (strain ATCC 700392 / 26695) (Campylobacter pylori) protein is Ribosomal RNA small subunit methyltransferase H.